The sequence spans 191 residues: FAD-linked sulfhydryl oxidase ERV1 (191 aa).

The 101-residue stretch at 72–172 (GPVTKEDLGR…FPCERVDARW (101 aa)) folds into the ERV/ALR sulfhydryl oxidase domain. FAD contacts are provided by Lys-76, Arg-81, Trp-84, Glu-121, His-125, Cys-148, His-151, Asn-152, Asn-155, Lys-160, and Arg-171. A disulfide bond links Cys-119 and Cys-122. Residues Cys-148 and Cys-165 are joined by a disulfide bond. Cysteines 177 and 182 form a disulfide. The Required for dimerization and substrate specificity motif lies at 177 to 182 (CEQKSC).

Homodimer. It depends on FAD as a cofactor. Post-translationally, contains three disulfide bonds; one catalytic disulfide (Cys-119 to Cys-122), one structural disulfide (Cys-148 to Cys-165), and one shuttle disulfide (Cys-177 to Cys-182).

The protein resides in the mitochondrion. It carries out the reaction 2 R'C(R)SH + O2 = R'C(R)S-S(R)CR' + H2O2. In terms of biological role, FAD-dependent sulfhydryl oxidase that catalyzes disulfide bond formation. Oxidizes thioredoxin in vitro. Required for the import and folding of small cysteine-containing proteins in the mitochondrial intermembrane space, and can act independently of the oxidoreductase MIA40. Can oxidize the cytochrome c oxidase assembly protein COX19, a typical substrate of MIA40. The polypeptide is FAD-linked sulfhydryl oxidase ERV1 (ERV1) (Arabidopsis thaliana (Mouse-ear cress)).